The sequence spans 179 residues: Large ribosomal subunit protein uL5 (179 aa).

The protein belongs to the universal ribosomal protein uL5 family. As to quaternary structure, part of the 50S ribosomal subunit; part of the 5S rRNA/L5/L18/L25 subcomplex. Contacts the 5S rRNA and the P site tRNA. Forms a bridge to the 30S subunit in the 70S ribosome.

Its function is as follows. This is one of the proteins that bind and probably mediate the attachment of the 5S RNA into the large ribosomal subunit, where it forms part of the central protuberance. In the 70S ribosome it contacts protein S13 of the 30S subunit (bridge B1b), connecting the 2 subunits; this bridge is implicated in subunit movement. Contacts the P site tRNA; the 5S rRNA and some of its associated proteins might help stabilize positioning of ribosome-bound tRNAs. The polypeptide is Large ribosomal subunit protein uL5 (Shewanella woodyi (strain ATCC 51908 / MS32)).